An 818-amino-acid chain; its full sequence is Serine/threonine-protein kinase PTK2/STK2 (818 aa).

The segment covering 28–39 has biased composition (polar residues); that stretch reads NSSSHTDNSSLL. Disordered stretches follow at residues 28–100 and 117–177; these read NSSS…GSVS and NPYL…SHHF. T56 bears the Phosphothreonine mark. Residues 57 to 81 show a composition bias toward low complexity; the sequence is SPSISGSGSGGNSPSSSAGARQRSA. S59 and S80 each carry phosphoserine. The span at 136–160 shows a compositional bias: basic and acidic residues; that stretch reads TRDRDRAVLDREKEKERARNKERNT. Positions 255–562 constitute a Protein kinase domain; the sequence is DTDNKPIGSG…MDDLFNDPFF (308 aa). ATP is bound by residues 261–269 and K285; that span reads IGSGGSSEV. D388 functions as the Proton acceptor in the catalytic mechanism. Residues 585-595 show a composition bias toward polar residues; sequence STSTNDFSENS. Positions 585 to 795 are disordered; sequence STSTNDFSEN…SVSSSKKKKV (211 aa). Phosphoserine occurs at positions 623 and 632. 2 stretches are compositionally biased toward basic and acidic residues: residues 638–651 and 659–685; these read KVKD…HDVG and TKPK…KVIE. Phosphoserine is present on S694. T700 is subject to Phosphothreonine. S711 is subject to Phosphoserine. The segment covering 727–736 has biased composition (low complexity); the sequence is TPTTPTHNGP. Residue T737 is modified to Phosphothreonine. 4 positions are modified to phosphoserine: S752, S755, S778, and S781. The segment covering 755–767 has biased composition (polar residues); that stretch reads SLKSETPASTKNF. Residues 768–789 are compositionally biased toward low complexity; the sequence is SAPNVSSSSNSLRSLGSPSVSS.

Belongs to the protein kinase superfamily. Ser/Thr protein kinase family.

Its subcellular location is the nucleus. The protein resides in the cytoplasm. It catalyses the reaction L-seryl-[protein] + ATP = O-phospho-L-seryl-[protein] + ADP + H(+). It carries out the reaction L-threonyl-[protein] + ATP = O-phospho-L-threonyl-[protein] + ADP + H(+). Functionally, essential determinant for high-affinity spermidine transport. Required for the activation of the plasma membrane proton pump PMA1 via phosphorylation of 'Ser-899'. The sequence is that of Serine/threonine-protein kinase PTK2/STK2 (PTK2) from Saccharomyces cerevisiae (strain ATCC 204508 / S288c) (Baker's yeast).